Reading from the N-terminus, the 383-residue chain is Acetylornithine deacetylase (383 aa).

His-80 is a binding site for Zn(2+). Asp-82 is an active-site residue. Asp-112 contacts Zn(2+). Glu-144 is an active-site residue. Zn(2+) contacts are provided by Glu-145, Glu-169, and His-355.

Belongs to the peptidase M20A family. ArgE subfamily. As to quaternary structure, homodimer. It depends on Zn(2+) as a cofactor. Co(2+) serves as cofactor. The cofactor is glutathione.

The protein localises to the cytoplasm. The enzyme catalyses N(2)-acetyl-L-ornithine + H2O = L-ornithine + acetate. The protein operates within amino-acid biosynthesis; L-arginine biosynthesis; L-ornithine from N(2)-acetyl-L-ornithine (linear): step 1/1. Functionally, catalyzes the hydrolysis of the amide bond of N(2)-acetylated L-amino acids. Cleaves the acetyl group from N-acetyl-L-ornithine to form L-ornithine, an intermediate in L-arginine biosynthesis pathway, and a branchpoint in the synthesis of polyamines. This is Acetylornithine deacetylase from Salmonella typhi.